We begin with the raw amino-acid sequence, 426 residues long: Enolase (426 aa).

Gln163 contacts (2R)-2-phosphoglycerate. Glu205 acts as the Proton donor in catalysis. Residues Asp242, Glu286, and Asp313 each coordinate Mg(2+). Residues Lys338, Arg367, Ser368, and Lys389 each coordinate (2R)-2-phosphoglycerate. Lys338 acts as the Proton acceptor in catalysis.

It belongs to the enolase family. Mg(2+) is required as a cofactor.

It localises to the cytoplasm. The protein localises to the secreted. Its subcellular location is the cell surface. The enzyme catalyses (2R)-2-phosphoglycerate = phosphoenolpyruvate + H2O. Its pathway is carbohydrate degradation; glycolysis; pyruvate from D-glyceraldehyde 3-phosphate: step 4/5. Functionally, catalyzes the reversible conversion of 2-phosphoglycerate (2-PG) into phosphoenolpyruvate (PEP). It is essential for the degradation of carbohydrates via glycolysis. The protein is Enolase of Helicobacter pylori (strain J99 / ATCC 700824) (Campylobacter pylori J99).